The chain runs to 397 residues: Transcription factor xenB (397 aa).

The interval 220–249 is disordered; that stretch reads TISDFETGDRQTISRSDTNSEVRPIPESPS. Residues 229–240 show a composition bias toward polar residues; sequence RQTISRSDTNSE.

Transcription factor; part of the gene cluster that mediates the biosynthesis of xenoacremones such as xenoacremone A, a compound that shows inhibitory activity toward the PI3K/AKT signaling pathway and which has the ability to induce apoptosis of A549 lung cancer cells. Acts as a positive regulator of the xenoacremones biosynthesis gene cluster. The chain is Transcription factor xenB from Xenoacremonium sinensis (Endophyte fungus).